A 240-amino-acid polypeptide reads, in one-letter code: Ribonuclease PH (240 aa).

Phosphate-binding positions include Arg-87 and 125–127; that span reads GTR.

Belongs to the RNase PH family. In terms of assembly, homohexameric ring arranged as a trimer of dimers.

It catalyses the reaction tRNA(n+1) + phosphate = tRNA(n) + a ribonucleoside 5'-diphosphate. In terms of biological role, phosphorolytic 3'-5' exoribonuclease that plays an important role in tRNA 3'-end maturation. Removes nucleotide residues following the 3'-CCA terminus of tRNAs; can also add nucleotides to the ends of RNA molecules by using nucleoside diphosphates as substrates, but this may not be physiologically important. Probably plays a role in initiation of 16S rRNA degradation (leading to ribosome degradation) during starvation. The polypeptide is Ribonuclease PH (Dictyoglomus turgidum (strain DSM 6724 / Z-1310)).